We begin with the raw amino-acid sequence, 578 residues long: MKASRFFIGTLKEAPADAEIVSHKLMVRAGMIRRVAGGIYNYLPVGLRSIRKVEAIVREEMNRAGAIELLMPAVQPAELWQESGRWEQYGPELLRFKDRKDNDFVIGPTHEEVVTDIARNQIKSYRQMPVNFYQIQTKFRDEIRPRFGVMRGREFIMKDAYSFDKDAAGLNESYRKMYDAYVRIFTRLGLEFRAVAADSGSIGGNFSHEFHVIADTGEDAIAYCPTSEFAANVEAAEALPLIAERAAPAEAMEKVATPGKAKCEAVAELLSIPLERTIKSIVLATDNEGAEPTIWLVMLRGDHDLNEIKVSKLPGLKNHRFATEQEIVEWFGTPPGYLGPVGTKKPVKVIADRTVANMSDFVVGANEVDYHIAGVNWGRDLPEPEVADVRNVKKGDPSPDGKGVIDICRGIEVGHVFQLGTKYSEAMGATFLDESGKPQPMLMGCYGVGITRILGAAIEQNFDDKGIIWPESIAPFEVVLCPMGYDRSDMVRETADKLYAELVAAGIDVILDDRGERPGVMFADWELIGVPHRLVIGERGLKEGKIEYQGRRDAEATLLPADTAAAAVAEKIRAALAH.

It belongs to the class-II aminoacyl-tRNA synthetase family. ProS type 1 subfamily. In terms of assembly, homodimer.

Its subcellular location is the cytoplasm. The enzyme catalyses tRNA(Pro) + L-proline + ATP = L-prolyl-tRNA(Pro) + AMP + diphosphate. Catalyzes the attachment of proline to tRNA(Pro) in a two-step reaction: proline is first activated by ATP to form Pro-AMP and then transferred to the acceptor end of tRNA(Pro). As ProRS can inadvertently accommodate and process non-cognate amino acids such as alanine and cysteine, to avoid such errors it has two additional distinct editing activities against alanine. One activity is designated as 'pretransfer' editing and involves the tRNA(Pro)-independent hydrolysis of activated Ala-AMP. The other activity is designated 'posttransfer' editing and involves deacylation of mischarged Ala-tRNA(Pro). The misacylated Cys-tRNA(Pro) is not edited by ProRS. In Burkholderia cenocepacia (strain HI2424), this protein is Proline--tRNA ligase.